The following is a 477-amino-acid chain: MTPTGAGLKATIFCILTWVSLTAGDRVYIHPFHLLYYSKSTCAQLENPSVETLPEPTFEPVPIQAKTSPVDEKTLRDKLVLATEKLEAEDRQRAAQVAMIANFMGFRMYKMLSEARGVASGAVLSPPALFGTLVSFYLGSLDPTASQLQVLLGVPVKEGDCTSRLDGHKVLTALQAVQGLLVTQGGSSSQTPLLQSTVVGLFTAPGLRLKQPFVESLGPFTPAIFPRSLDLSTDPVLAAQKINRFVQAVTGWKMNLPLEGVSTDSTLFFNTYVHFQGKMRGFSQLTGLHEFWVDNSTSVSVPMLSGTGNFQHWSDAQNNFSVTRVPLGESVTLLLIQPQCASDLDRVEVLVFQHDFLTWIKNPPPRAIRLTLPQLEIRGSYNLQDLLAQAKLSTLLGAEANLGKMGDTNPRVGEVLNSILLELQAGEEEQPTESAQQPGSPEVLDVTLSSPFLFAIYERDSGALHFLGRVDNPQNVV.

The first 24 residues, 1–24, serve as a signal peptide directing secretion; the sequence is MTPTGAGLKATIFCILTWVSLTAG. C42 and C161 are disulfide-bonded. 2 N-linked (GlcNAc...) asparagine glycosylation sites follow: N295 and N319.

This sequence belongs to the serpin family. In response to low blood pressure, the enzyme renin/REN cleaves angiotensinogen to produce angiotensin-1. Angiotensin-1 is a substrate of ACE (angiotensin converting enzyme) that removes a dipeptide to yield the physiologically active peptide angiotensin-2. Angiotensin-1 and angiotensin-2 can be further processed to generate angiotensin-3, angiotensin-4. Angiotensin 1-9 is cleaved from angiotensin-1 by ACE2 and can be further processed by ACE to produce angiotensin 1-7, angiotensin 1-5 and angiotensin 1-4. Angiotensin 1-7 has also been proposed to be cleaved from angiotensin-2 by ACE2 or from angiotensin-1 by MME (neprilysin). In terms of processing, the disulfide bond is labile. Angiotensinogen is present in the circulation in a near 40:60 ratio with the oxidized disulfide-bonded form, which preferentially interacts with receptor-bound renin.

It is found in the secreted. In terms of biological role, essential component of the renin-angiotensin system (RAS), a potent regulator of blood pressure, body fluid and electrolyte homeostasis. Functionally, acts directly on vascular smooth muscle as a potent vasoconstrictor, affects cardiac contractility and heart rate through its action on the sympathetic nervous system, and alters renal sodium and water absorption through its ability to stimulate the zona glomerulosa cells of the adrenal cortex to synthesize and secrete aldosterone. Acts by binding to angiotensin receptors AGTR1 and AGTR2. Also binds the DEAR/FBXW7-AS1 receptor. Stimulates aldosterone release. Its function is as follows. Is a ligand for the G-protein coupled receptor MAS1. Has vasodilator and antidiuretic effects. Has an antithrombotic effect that involves MAS1-mediated release of nitric oxide from platelets. In Rattus norvegicus (Rat), this protein is Angiotensinogen (Agt).